A 300-amino-acid polypeptide reads, in one-letter code: Ribosomal protein L11 methyltransferase (300 aa).

Residues threonine 147, glycine 168, aspartate 190, and asparagine 236 each contribute to the S-adenosyl-L-methionine site.

Belongs to the methyltransferase superfamily. PrmA family.

The protein resides in the cytoplasm. It catalyses the reaction L-lysyl-[protein] + 3 S-adenosyl-L-methionine = N(6),N(6),N(6)-trimethyl-L-lysyl-[protein] + 3 S-adenosyl-L-homocysteine + 3 H(+). Methylates ribosomal protein L11. The protein is Ribosomal protein L11 methyltransferase of Leptospira borgpetersenii serovar Hardjo-bovis (strain JB197).